Consider the following 183-residue polypeptide: NEDD8-conjugating enzyme Ubc12 (183 aa).

Residue Met-1 is modified to N-acetylmethionine. Positions 1–28 (MIKLFSLKQQKKEEESAGGTKGSSKKAS) are disordered. The 145-residue stretch at 29–173 (AAQLRIQKDI…VQRSMRGGYI (145 aa)) folds into the UBC core domain. Cys-111 functions as the Glycyl thioester intermediate in the catalytic mechanism.

The protein belongs to the ubiquitin-conjugating enzyme family. UBC12 subfamily. In terms of processing, the acetylation of Met-1 increases affinity for DCUN1D1 by about 2 orders of magnitude and is crucial for NEDD8 transfer to cullins.

It catalyses the reaction [E1 NEDD8-activating enzyme]-S-[NEDD8 protein]-yl-L-cysteine + [E2 NEDD8-conjugating enzyme]-L-cysteine = [E1 NEDD8-activating enzyme]-L-cysteine + [E2 NEDD8-conjugating enzyme]-S-[NEDD8-protein]-yl-L-cysteine.. It functions in the pathway protein modification; protein neddylation. Its function is as follows. Accepts the ubiquitin-like protein NEDD8 from the UBA3-NAE1 E1 complex and catalyzes its covalent attachment to other proteins. The specific interaction with the E3 ubiquitin ligase rbx1, but not rbx2, suggests that the rbx1-ube2m complex neddylates specific target proteins, such as cul1, cul2, cul3 and cul4. Involved in cell proliferation. The chain is NEDD8-conjugating enzyme Ubc12 (ube2m) from Xenopus tropicalis (Western clawed frog).